A 320-amino-acid chain; its full sequence is GTPase Era (320 aa).

Residues His25 to Lys193 enclose the Era-type G domain. A G1 region spans residues Gly33 to Ser40. Gly33 to Ser40 contributes to the GTP binding site. The interval Gln59–His63 is G2. The tract at residues Asp80 to Gly83 is G3. Residues Asp80–Leu84 and Asn142–Asp145 each bind GTP. Residues Asn142–Asp145 form a G4 region. Residues Ile172–Ala174 form a G5 region. The KH type-2 domain occupies Val216–Ser302.

Belongs to the TRAFAC class TrmE-Era-EngA-EngB-Septin-like GTPase superfamily. Era GTPase family. In terms of assembly, monomer.

Its subcellular location is the cytoplasm. It is found in the cell inner membrane. Functionally, an essential GTPase that binds both GDP and GTP, with rapid nucleotide exchange. Plays a role in 16S rRNA processing and 30S ribosomal subunit biogenesis and possibly also in cell cycle regulation and energy metabolism. This chain is GTPase Era, found in Vibrio vulnificus (strain CMCP6).